A 126-amino-acid chain; its full sequence is Large ribosomal subunit protein uL22 (126 aa).

Belongs to the universal ribosomal protein uL22 family. Part of the 50S ribosomal subunit.

This protein binds specifically to 23S rRNA; its binding is stimulated by other ribosomal proteins, e.g. L4, L17, and L20. It is important during the early stages of 50S assembly. It makes multiple contacts with different domains of the 23S rRNA in the assembled 50S subunit and ribosome. Its function is as follows. The globular domain of the protein is located near the polypeptide exit tunnel on the outside of the subunit, while an extended beta-hairpin is found that lines the wall of the exit tunnel in the center of the 70S ribosome. The polypeptide is Large ribosomal subunit protein uL22 (Paracoccus denitrificans (strain Pd 1222)).